A 408-amino-acid polypeptide reads, in one-letter code: Glycoprotein 55 (408 aa).

An N-terminal signal peptide occupies residues methionine 1–serine 32. Topologically, residues valine 33–threonine 385 are virion surface. Asparagine 43 and asparagine 58 each carry an N-linked (GlcNAc...) asparagine; by host glycan. The disordered stretch occupies residues arginine 256–threonine 281. Asparagine 297 and asparagine 329 each carry an N-linked (GlcNAc...) asparagine; by host glycan. Positions lysine 335 to glycine 371 form a coiled coil. Residue asparagine 378 is glycosylated (N-linked (GlcNAc...) asparagine; by host). A helical transmembrane segment spans residues leucine 386–leucine 406. The Intravirion portion of the chain corresponds to histidine 407–serine 408.

It is found in the host endoplasmic reticulum membrane. Its subcellular location is the host cell membrane. The protein localises to the virion membrane. Functionally, envelope-like membrane glycoprotein. This is Glycoprotein 55 (env) from Mus musculus (Mouse).